The chain runs to 945 residues: Xylosyltransferase 1 (945 aa).

Residues 1-17 (MQAAPCARRLARRSHSA) are Cytoplasmic-facing. The chain crosses the membrane as a helical; Signal-anchor for type II membrane protein span at residues 18–38 (LLAALTVLLLQTLVVWNFSSL). At 39–945 (DSGAGERRGG…GAVKPDGRLR (907 aa)) the chain is on the lumenal side. The tract at residues 42–245 (AGERRGGAAV…KYDQPPKCDI (204 aa)) is disordered. A compositionally biased stretch (gly residues) spans 76-103 (RGGGGGGGGCGGGGRGPQARARGGGPGE). The segment covering 131–147 (KVRTDSNNENSVPKDFE) has biased composition (basic and acidic residues). The segment covering 149–158 (VDNSNFAPRT) has biased composition (polar residues). The segment covering 163-190 (HQPELAKKPPSRQKELLKRKLEQQEKGK) has biased composition (basic and acidic residues). Asparagine 212 carries N-linked (GlcNAc...) asparagine glycosylation. A compositionally biased stretch (basic and acidic residues) spans 235–245 (TKYDQPPKCDI). Intrachain disulfides connect cysteine 243–cysteine 271, cysteine 287–cysteine 528, cysteine 547–cysteine 560, and cysteine 549–cysteine 558. UDP-alpha-D-xylose contacts are provided by residues valine 319, aspartate 347, and 376-378 (TIW). Asparagine 407 carries N-linked (GlcNAc...) asparagine glycosylation. 480-481 (DW) provides a ligand contact to UDP-alpha-D-xylose. Residues serine 561 and 584–585 (RK) contribute to the UDP-alpha-D-xylose site. 2 disulfide bridges follow: cysteine 661-cysteine 913 and cysteine 906-cysteine 919. N-linked (GlcNAc...) asparagine glycosylation occurs at asparagine 763. The segment at 926-945 (SFSPDPKSELGAVKPDGRLR) is disordered.

This sequence belongs to the glycosyltransferase 14 family. XylT subfamily. In terms of assembly, monomer. The cofactor is a divalent metal cation. Contains 7 disulfide bonds. In terms of processing, N-glycosylated.

The protein resides in the golgi apparatus membrane. The enzyme catalyses UDP-alpha-D-xylose + L-seryl-[protein] = 3-O-(beta-D-xylosyl)-L-seryl-[protein] + UDP + H(+). Its pathway is glycan metabolism; chondroitin sulfate biosynthesis. It participates in glycan metabolism; heparan sulfate biosynthesis. Its function is as follows. Catalyzes the first step in the biosynthesis of chondroitin sulfate and dermatan sulfate proteoglycans, such as DCN. Transfers D-xylose from UDP-D-xylose to specific serine residues of the core protein. Required for normal maturation of chondrocytes during bone development, normal onset of ossification and normal embryonic and postnatal skeleton development, especially of the long bones. In Pan troglodytes (Chimpanzee), this protein is Xylosyltransferase 1 (XYLT1).